Consider the following 193-residue polypeptide: Lipid A acyltransferase PagP (193 aa).

A signal peptide spans 1-32; it reads MNGMAVVMIIRKYFLIIALLVMPWLAIPSVSA. Active-site residues include H65, D108, and S109.

Belongs to the lipid A palmitoyltransferase family. In terms of assembly, homodimer.

The protein localises to the cell outer membrane. It carries out the reaction a lipid A + a 1,2-diacyl-sn-glycero-3-phosphocholine = a hepta-acyl lipid A + a 2-acyl-sn-glycero-3-phosphocholine. The enzyme catalyses a lipid IVA + a 1,2-diacyl-sn-glycero-3-phosphocholine = a lipid IVB + a 2-acyl-sn-glycero-3-phosphocholine. The catalysed reaction is a lipid IIA + a 1,2-diacyl-sn-glycero-3-phosphocholine = a lipid IIB + a 2-acyl-sn-glycero-3-phosphocholine. Functionally, transfers a fatty acid residue from the sn-1 position of a phospholipid to the N-linked hydroxyfatty acid chain on the proximal unit of lipid A or its precursors. This is Lipid A acyltransferase PagP from Salmonella paratyphi C (strain RKS4594).